A 955-amino-acid chain; its full sequence is UPF0182 protein syc2310_c (955 aa).

9 helical membrane-spanning segments follow: residues 12 to 32, 45 to 65, 85 to 105, 141 to 161, 163 to 183, 224 to 244, 263 to 283, 306 to 326, and 343 to 363; these read IAAIALGLSLLTRIHIETLWF, LAVQALLFSVVGIAITGLIGG, LQLGGLLTVLTLLWIALLALT, GSWPLGMGLLLGVGSLVLFLW, PWPLLIGLSSLTSLAIALLTS, FDLWIGLAFSFCAVLAVYYLA, HLVRLAIAIALFLAGHCWLAQ, LPLLQVWMILFGIAAIALFWQ, and AAIASVLIWVTLPAIVQQLVV.

This sequence belongs to the UPF0182 family.

It is found in the cell membrane. This is UPF0182 protein syc2310_c from Synechococcus sp. (strain ATCC 27144 / PCC 6301 / SAUG 1402/1) (Anacystis nidulans).